Consider the following 335-residue polypeptide: Probable pectinesterase 29 (335 aa).

The signal sequence occupies residues 1–24 (MGTHRIFIGLIALCCFCLPHLIEA). Asn43 carries an N-linked (GlcNAc...) asparagine glycan. Asp166 acts as the Proton donor in catalysis. Asp187 serves as the catalytic Nucleophile. Arg248 and Trp250 together coordinate substrate. Asn262 carries an N-linked (GlcNAc...) asparagine glycan.

Belongs to the pectinesterase family. Expressed in flower buds.

The protein localises to the secreted. It is found in the cell wall. It carries out the reaction [(1-&gt;4)-alpha-D-galacturonosyl methyl ester](n) + n H2O = [(1-&gt;4)-alpha-D-galacturonosyl](n) + n methanol + n H(+). Its pathway is glycan metabolism; pectin degradation; 2-dehydro-3-deoxy-D-gluconate from pectin: step 1/5. In terms of biological role, acts in the modification of cell walls via demethylesterification of cell wall pectin. The polypeptide is Probable pectinesterase 29 (PME29) (Arabidopsis thaliana (Mouse-ear cress)).